The primary structure comprises 69 residues: Protein SlyX homolog (69 aa).

The protein belongs to the SlyX family.

This chain is Protein SlyX homolog, found in Maricaulis maris (strain MCS10) (Caulobacter maris).